The following is a 156-amino-acid chain: Peroxisome assembly protein 22 (156 aa).

A helical membrane pass occupies residues leucine 24–tyrosine 46.

It belongs to the peroxin-22 family.

The protein localises to the peroxisome membrane. In terms of biological role, involved in peroxisome biogenesis. This is Peroxisome assembly protein 22 (PEX22) from Kluyveromyces lactis (strain ATCC 8585 / CBS 2359 / DSM 70799 / NBRC 1267 / NRRL Y-1140 / WM37) (Yeast).